We begin with the raw amino-acid sequence, 145 residues long: Arginine repressor (145 aa).

The protein belongs to the ArgR family.

The protein resides in the cytoplasm. Its pathway is amino-acid biosynthesis; L-arginine biosynthesis [regulation]. Its function is as follows. Regulates arginine biosynthesis genes. The protein is Arginine repressor of Solibacter usitatus (strain Ellin6076).